The sequence spans 239 residues: Purine nucleoside phosphorylase DeoD-type 1 (239 aa).

His-5 is a binding site for a purine D-ribonucleoside. Residues Gly-21, Arg-25, Arg-44, and 88–91 (RVGS) contribute to the phosphate site. Residues 180 to 182 (EME) and 204 to 205 (SD) contribute to the a purine D-ribonucleoside site. Asp-205 (proton donor) is an active-site residue.

This sequence belongs to the PNP/UDP phosphorylase family. Homohexamer; trimer of homodimers.

It catalyses the reaction a purine D-ribonucleoside + phosphate = a purine nucleobase + alpha-D-ribose 1-phosphate. The enzyme catalyses a purine 2'-deoxy-D-ribonucleoside + phosphate = a purine nucleobase + 2-deoxy-alpha-D-ribose 1-phosphate. In terms of biological role, catalyzes the reversible phosphorolytic breakdown of the N-glycosidic bond in the beta-(deoxy)ribonucleoside molecules, with the formation of the corresponding free purine bases and pentose-1-phosphate. This Vibrio parahaemolyticus serotype O3:K6 (strain RIMD 2210633) protein is Purine nucleoside phosphorylase DeoD-type 1.